Consider the following 297-residue polypeptide: 32 kDa beta-galactoside-binding lectin lec-3 (297 aa).

Galectin domains follow at residues 11–142 and 151–290; these read YRSK…VQWG and ESGI…IQVV. Position 224–230 (224–230) interacts with a beta-D-galactoside; the sequence is WGNEERE.

Its function is as follows. Binds galactose. The chain is 32 kDa beta-galactoside-binding lectin lec-3 (lec-3) from Caenorhabditis elegans.